The following is a 207-amino-acid chain: Guanylate kinase (207 aa).

Residues 4-184 (GILFIISAPS…AINDLRTIII (181 aa)) enclose the Guanylate kinase-like domain. Residue 11–18 (APSGTGKS) coordinates ATP.

The protein belongs to the guanylate kinase family.

It is found in the cytoplasm. The enzyme catalyses GMP + ATP = GDP + ADP. In terms of biological role, essential for recycling GMP and indirectly, cGMP. This chain is Guanylate kinase, found in Buchnera aphidicola subsp. Schizaphis graminum (strain Sg).